A 207-amino-acid chain; its full sequence is Thiamine-phosphate synthase (207 aa).

Residues 37–41 (QYRHK) and asparagine 69 contribute to the 4-amino-2-methyl-5-(diphosphooxymethyl)pyrimidine site. Mg(2+) contacts are provided by aspartate 70 and aspartate 89. 4-amino-2-methyl-5-(diphosphooxymethyl)pyrimidine contacts are provided by serine 108 and lysine 138. 2-[(2R,5Z)-2-carboxy-4-methylthiazol-5(2H)-ylidene]ethyl phosphate contacts are provided by residues glycine 165 and 185-186 (IS).

Belongs to the thiamine-phosphate synthase family. Mg(2+) is required as a cofactor.

It carries out the reaction 2-[(2R,5Z)-2-carboxy-4-methylthiazol-5(2H)-ylidene]ethyl phosphate + 4-amino-2-methyl-5-(diphosphooxymethyl)pyrimidine + 2 H(+) = thiamine phosphate + CO2 + diphosphate. The catalysed reaction is 2-(2-carboxy-4-methylthiazol-5-yl)ethyl phosphate + 4-amino-2-methyl-5-(diphosphooxymethyl)pyrimidine + 2 H(+) = thiamine phosphate + CO2 + diphosphate. The enzyme catalyses 4-methyl-5-(2-phosphooxyethyl)-thiazole + 4-amino-2-methyl-5-(diphosphooxymethyl)pyrimidine + H(+) = thiamine phosphate + diphosphate. Its pathway is cofactor biosynthesis; thiamine diphosphate biosynthesis; thiamine phosphate from 4-amino-2-methyl-5-diphosphomethylpyrimidine and 4-methyl-5-(2-phosphoethyl)-thiazole: step 1/1. In terms of biological role, condenses 4-methyl-5-(beta-hydroxyethyl)thiazole monophosphate (THZ-P) and 2-methyl-4-amino-5-hydroxymethyl pyrimidine pyrophosphate (HMP-PP) to form thiamine monophosphate (TMP). The chain is Thiamine-phosphate synthase from Janthinobacterium sp. (strain Marseille) (Minibacterium massiliensis).